The sequence spans 87 residues: Acylphosphatase (87 aa).

Residues 2 to 87 (RLTALVSGHV…ETGLREFHIY (86 aa)) enclose the Acylphosphatase-like domain. Active-site residues include arginine 17 and asparagine 35.

This sequence belongs to the acylphosphatase family.

The enzyme catalyses an acyl phosphate + H2O = a carboxylate + phosphate + H(+). This chain is Acylphosphatase (acyP), found in Deinococcus radiodurans (strain ATCC 13939 / DSM 20539 / JCM 16871 / CCUG 27074 / LMG 4051 / NBRC 15346 / NCIMB 9279 / VKM B-1422 / R1).